Here is a 428-residue protein sequence, read N- to C-terminus: Gamma-glutamyl phosphate reductase (428 aa).

The protein belongs to the gamma-glutamyl phosphate reductase family.

Its subcellular location is the cytoplasm. It carries out the reaction L-glutamate 5-semialdehyde + phosphate + NADP(+) = L-glutamyl 5-phosphate + NADPH + H(+). Its pathway is amino-acid biosynthesis; L-proline biosynthesis; L-glutamate 5-semialdehyde from L-glutamate: step 2/2. Its function is as follows. Catalyzes the NADPH-dependent reduction of L-glutamate 5-phosphate into L-glutamate 5-semialdehyde and phosphate. The product spontaneously undergoes cyclization to form 1-pyrroline-5-carboxylate. In Chromohalobacter salexigens (strain ATCC BAA-138 / DSM 3043 / CIP 106854 / NCIMB 13768 / 1H11), this protein is Gamma-glutamyl phosphate reductase.